Here is a 196-residue protein sequence, read N- to C-terminus: Aequorin-1 (196 aa).

Residues 1 to 7 (MTSEQYS) constitute a propeptide that is removed on maturation. 4 EF-hand domains span residues 18–53 (KWIG…IVIN), 54–108 (NLGA…SKNQ), 111–146 (LIRL…DGII), and 147–182 (QSSE…FWYT). Residues Asp31, Asn33, Asn35, Arg37, and Glu42 each coordinate Ca(2+). 3 may interact with the chromophore regions span residues 47–57 (ASDIVINNLGA), 62–72 (AKRHKDAVEAF), and 107–117 (NQITLIRLWGD). Asp124, Asp126, Asn128, Glu135, Asp160, Asp162, Ser164, Gln166, and Glu171 together coordinate Ca(2+).

It belongs to the aequorin family. Post-translationally, the reduction of the disulfide bond is necessary to regenerate aequorin from apoaequorin.

Ca(2+)-dependent bioluminescence photoprotein. Displays an emission peak at 470 nm (blue light). Trace amounts of calcium ion trigger the intramolecular oxidation of the chromophore, coelenterazine into coelenteramide and CO(2) with the concomitant emission of light. The polypeptide is Aequorin-1 (Aequorea victoria (Water jellyfish)).